Reading from the N-terminus, the 154-residue chain is ORF3b protein (154 aa).

The segment at 80–138 (LQTLVLKMLHSSSLTSLLKTHRMCKYTQSTALQELLIQQWIQFMMSRRRLLACLCKHKK) is mitochondrial targeting signal. Positions 134 to 154 (CKHKKVSTNLCTHSFRKKQVR) are nucleolar targeting. The short motif at 135–153 (KHKKVSTNLCTHSFRKKQV) is the Bipartite nuclear localization signal element.

Interacts with host RUNX1 isoform b.

It localises to the host nucleus. It is found in the host nucleolus. Its subcellular location is the host mitochondrion. Induces host cell G0/G1 arrest and apoptosis. The sequence is that of ORF3b protein from Homo sapiens (Human).